A 329-amino-acid polypeptide reads, in one-letter code: DNA-directed RNA polymerase subunit alpha (329 aa).

Residues 1 to 235 form an alpha N-terminal domain (alpha-NTD) region; sequence MLGSVTDFLK…EQLEAFVDLR (235 aa). An alpha C-terminal domain (alpha-CTD) region spans residues 249 to 329; it reads FDPILLRPVD…NWPPASIADE (81 aa).

Belongs to the RNA polymerase alpha chain family. In terms of assembly, homodimer. The RNAP catalytic core consists of 2 alpha, 1 beta, 1 beta' and 1 omega subunit. When a sigma factor is associated with the core the holoenzyme is formed, which can initiate transcription.

The enzyme catalyses RNA(n) + a ribonucleoside 5'-triphosphate = RNA(n+1) + diphosphate. DNA-dependent RNA polymerase catalyzes the transcription of DNA into RNA using the four ribonucleoside triphosphates as substrates. The chain is DNA-directed RNA polymerase subunit alpha from Aeromonas hydrophila subsp. hydrophila (strain ATCC 7966 / DSM 30187 / BCRC 13018 / CCUG 14551 / JCM 1027 / KCTC 2358 / NCIMB 9240 / NCTC 8049).